A 304-amino-acid chain; its full sequence is Aspartate carbamoyltransferase catalytic subunit (304 aa).

Positions 49 and 50 each coordinate carbamoyl phosphate. K77 provides a ligand contact to L-aspartate. The carbamoyl phosphate site is built by R99, H127, and Q130. L-aspartate is bound by residues R160 and R211. Residues A252 and P253 each coordinate carbamoyl phosphate.

This sequence belongs to the aspartate/ornithine carbamoyltransferase superfamily. ATCase family. As to quaternary structure, heterododecamer (2C3:3R2) of six catalytic PyrB chains organized as two trimers (C3), and six regulatory PyrI chains organized as three dimers (R2).

The enzyme catalyses carbamoyl phosphate + L-aspartate = N-carbamoyl-L-aspartate + phosphate + H(+). Its pathway is pyrimidine metabolism; UMP biosynthesis via de novo pathway; (S)-dihydroorotate from bicarbonate: step 2/3. Its function is as follows. Catalyzes the condensation of carbamoyl phosphate and aspartate to form carbamoyl aspartate and inorganic phosphate, the committed step in the de novo pyrimidine nucleotide biosynthesis pathway. This Bacillus cereus (strain ZK / E33L) protein is Aspartate carbamoyltransferase catalytic subunit.